Consider the following 677-residue polypeptide: Protein asunder (677 aa).

Residues 515–540 adopt a coiled-coil conformation; sequence RLKLSKAKDQYRLLYRELEQLIQLNS. Positions 578 to 598 are enriched in low complexity; that stretch reads ESPLSPERLEPTSSSSSNSLL. The interval 578–604 is disordered; that stretch reads ESPLSPERLEPTSSSSSNSLLKARKRR. The Nuclear localization signal (NLS) motif lies at 598–604; sequence LKARKRR.

It belongs to the Integrator subunit 13 family. As to quaternary structure, belongs to the multiprotein complex Integrator, at least composed of IntS1, IntS2, IntS3, IntS4, omd/IntS5, IntS6, defl/IntS7, IntS8, IntS9, IntS10, IntS11, IntS12, asun/IntS13, IntS14 and IntS15. The core complex associates with protein phosphatase 2A subunits mts/PP2A and Pp2A-29B, to form the Integrator-PP2A (INTAC) complex. Post-translationally, phosphorylated.

It is found in the nucleus. The protein localises to the cytoplasm. The protein resides in the perinuclear region. In terms of biological role, component of the integrator complex, a multiprotein complex that terminates RNA polymerase II (Pol II) transcription in the promoter-proximal region of genes. The integrator complex provides a quality checkpoint during transcription elongation by driving premature transcription termination of transcripts that are unfavorably configured for transcriptional elongation: the complex terminates transcription by (1) catalyzing dephosphorylation of the C-terminal domain (CTD) of Pol II subunit Polr2A/Rbp1 and Spt5, and (2) degrading the exiting nascent RNA transcript via endonuclease activity. The integrator complex is also involved in the 3'-end processing of the U7 snRNA, and also the spliceosomal snRNAs U1, U2, U4 and U5. This is Protein asunder (asun) from Drosophila willistoni (Fruit fly).